The following is a 326-amino-acid chain: D-alanine--D-alanine ligase (326 aa).

The ATP-grasp domain maps to 112-312 (KRIWRFEGLP…YENLCLGILA (201 aa)). 138-193 (LQALGAPMIVKPSREGSTIGLTKVWTAEECDQAYVLASRYDPEVLCEEFIEGDETT) provides a ligand contact to ATP. Aspartate 265, glutamate 279, and asparagine 281 together coordinate Mg(2+).

It belongs to the D-alanine--D-alanine ligase family. Requires Mg(2+) as cofactor. The cofactor is Mn(2+).

The protein resides in the cytoplasm. It catalyses the reaction 2 D-alanine + ATP = D-alanyl-D-alanine + ADP + phosphate + H(+). The protein operates within cell wall biogenesis; peptidoglycan biosynthesis. In terms of biological role, cell wall formation. The protein is D-alanine--D-alanine ligase of Delftia acidovorans (strain DSM 14801 / SPH-1).